The primary structure comprises 565 residues: Protein unc-87 (565 aa).

Over residues 1–27 (MLSFNNTTSASSFQSASSRYLMSSSSS) the composition is skewed to low complexity. 2 disordered regions span residues 1–83 (MLSF…TTNS) and 237–262 (IPSQ…RNTN). Residues 54-69 (EALERLRPNTASRERN) are compositionally biased toward basic and acidic residues. Calponin-like repeat units lie at residues 237–262 (IPSQ…RNTN), 285–310 (VRLQ…RDVC), and 338–363 (VRLQ…RRET). Over residues 250–262 (KLMTNFGTPRNTN) the composition is skewed to polar residues. The segment covering 369-381 (SKHPEYDHEKPDQ) has biased composition (basic and acidic residues). The tract at residues 369–400 (SKHPEYDHEKPDQSEIPLQSGTNKFASQKGMT) is disordered. Polar residues predominate over residues 384 to 398 (IPLQSGTNKFASQKG). Calponin-like repeat units follow at residues 384–409 (IPLQ…RRET), 431–456 (IPSQ…RWEV), 472–497 (VRLQ…RNTT), and 517–542 (IPSQ…RDVK).

The protein belongs to the calponin family. In terms of assembly, monomer. Interacts with F-actin. Interacts with myosin. In terms of tissue distribution, expressed in the body wall muscles. Isoform a: Expression in the pharynx, anal depressor muscle, uterine muscle, vulva and unidentified neurons in the head and the ventral region. Isoform b: Expression in the body wall muscles, spermatheca, vulva and in the myoepithelial sheath.

The protein localises to the cytoplasm. It is found in the myofibril. It localises to the sarcomere. Its subcellular location is the i band. In terms of biological role, thin filament-associated protein that is implicated in actin bundling and actin filament dynamics. Exhibits F-actin cross-linking activity. Required for the maintenance of sarcomeric actin organization in striated muscles. Competes with unc-60 isoform b for actin binding and protects actin filaments from depolymerization by unc-60, thereby contributing to actin filament stability. Cooperates with myosin to form actomyosin bundles and inhibits actomyosin ATPase activity and actomyosin motility. Might protect the myofilaments from mechanical stress. Its function is as follows. Acts as a negative regulator of myosin-dependent contractility of smooth muscle-like cells in the somatic gonad. This chain is Protein unc-87 (unc-87), found in Caenorhabditis elegans.